The sequence spans 462 residues: L-seryl-tRNA(Sec) selenium transferase (462 aa).

K293 carries the N6-(pyridoxal phosphate)lysine modification.

It belongs to the SelA family. The cofactor is pyridoxal 5'-phosphate.

It localises to the cytoplasm. The catalysed reaction is L-seryl-tRNA(Sec) + selenophosphate + H(+) = L-selenocysteinyl-tRNA(Sec) + phosphate. It participates in aminoacyl-tRNA biosynthesis; selenocysteinyl-tRNA(Sec) biosynthesis; selenocysteinyl-tRNA(Sec) from L-seryl-tRNA(Sec) (bacterial route): step 1/1. Functionally, converts seryl-tRNA(Sec) to selenocysteinyl-tRNA(Sec) required for selenoprotein biosynthesis. The sequence is that of L-seryl-tRNA(Sec) selenium transferase from Clostridium botulinum (strain Okra / Type B1).